A 364-amino-acid polypeptide reads, in one-letter code: DNA polymerase IV (364 aa).

The UmuC domain maps to 14–198; sequence IIHIDMDAFF…LPIEKFHGVG (185 aa). Mg(2+) is bound by residues D18 and D116. E117 is an active-site residue.

The protein belongs to the DNA polymerase type-Y family. In terms of assembly, monomer. The cofactor is Mg(2+).

The protein localises to the cytoplasm. It catalyses the reaction DNA(n) + a 2'-deoxyribonucleoside 5'-triphosphate = DNA(n+1) + diphosphate. In terms of biological role, poorly processive, error-prone DNA polymerase involved in untargeted mutagenesis. Copies undamaged DNA at stalled replication forks, which arise in vivo from mismatched or misaligned primer ends. These misaligned primers can be extended by PolIV. Exhibits no 3'-5' exonuclease (proofreading) activity. May be involved in translesional synthesis, in conjunction with the beta clamp from PolIII. This is DNA polymerase IV from Streptococcus pyogenes serotype M4 (strain MGAS10750).